A 209-amino-acid chain; its full sequence is Protein GrpE (209 aa).

The segment at M1–N63 is disordered. Basic and acidic residues-rich tracts occupy residues K7–P42 and E50–N63.

The protein belongs to the GrpE family. Homodimer.

The protein localises to the cytoplasm. Its function is as follows. Participates actively in the response to hyperosmotic and heat shock by preventing the aggregation of stress-denatured proteins, in association with DnaK and GrpE. It is the nucleotide exchange factor for DnaK and may function as a thermosensor. Unfolded proteins bind initially to DnaJ; upon interaction with the DnaJ-bound protein, DnaK hydrolyzes its bound ATP, resulting in the formation of a stable complex. GrpE releases ADP from DnaK; ATP binding to DnaK triggers the release of the substrate protein, thus completing the reaction cycle. Several rounds of ATP-dependent interactions between DnaJ, DnaK and GrpE are required for fully efficient folding. The polypeptide is Protein GrpE (Methanosarcina mazei (strain ATCC BAA-159 / DSM 3647 / Goe1 / Go1 / JCM 11833 / OCM 88) (Methanosarcina frisia)).